A 311-amino-acid polypeptide reads, in one-letter code: Methionyl-tRNA formyltransferase (311 aa).

S112–P115 is a binding site for (6S)-5,6,7,8-tetrahydrofolate.

The protein belongs to the Fmt family.

The enzyme catalyses L-methionyl-tRNA(fMet) + (6R)-10-formyltetrahydrofolate = N-formyl-L-methionyl-tRNA(fMet) + (6S)-5,6,7,8-tetrahydrofolate + H(+). Functionally, attaches a formyl group to the free amino group of methionyl-tRNA(fMet). The formyl group appears to play a dual role in the initiator identity of N-formylmethionyl-tRNA by promoting its recognition by IF2 and preventing the misappropriation of this tRNA by the elongation apparatus. This Rhizobium etli (strain ATCC 51251 / DSM 11541 / JCM 21823 / NBRC 15573 / CFN 42) protein is Methionyl-tRNA formyltransferase.